Here is a 189-residue protein sequence, read N- to C-terminus: Threonylcarbamoyl-AMP synthase (189 aa).

The YrdC-like domain maps to T6–G189.

The protein belongs to the SUA5 family. TsaC subfamily.

It localises to the cytoplasm. It catalyses the reaction L-threonine + hydrogencarbonate + ATP = L-threonylcarbamoyladenylate + diphosphate + H2O. Functionally, required for the formation of a threonylcarbamoyl group on adenosine at position 37 (t(6)A37) in tRNAs that read codons beginning with adenine. Catalyzes the conversion of L-threonine, HCO(3)(-)/CO(2) and ATP to give threonylcarbamoyl-AMP (TC-AMP) as the acyladenylate intermediate, with the release of diphosphate. The polypeptide is Threonylcarbamoyl-AMP synthase (Serratia proteamaculans (strain 568)).